Here is a 210-residue protein sequence, read N- to C-terminus: Probable nicotinate-nucleotide adenylyltransferase (210 aa).

Belongs to the NadD family.

The enzyme catalyses nicotinate beta-D-ribonucleotide + ATP + H(+) = deamido-NAD(+) + diphosphate. It participates in cofactor biosynthesis; NAD(+) biosynthesis; deamido-NAD(+) from nicotinate D-ribonucleotide: step 1/1. Functionally, catalyzes the reversible adenylation of nicotinate mononucleotide (NaMN) to nicotinic acid adenine dinucleotide (NaAD). The chain is Probable nicotinate-nucleotide adenylyltransferase from Streptococcus pyogenes serotype M6 (strain ATCC BAA-946 / MGAS10394).